The following is a 388-amino-acid chain: Norsolorinic acid reductase (388 aa).

Tyr-74 functions as the Proton donor in the catalytic mechanism. 233-243 (GVLGRGQFRSA) is a binding site for NADP(+).

The protein belongs to the aldo/keto reductase family. Aldo/keto reductase 2 subfamily.

The protein operates within mycotoxin biosynthesis; aflatoxin biosynthesis. This is Norsolorinic acid reductase (norA) from Aspergillus flavus (strain ATCC 200026 / FGSC A1120 / IAM 13836 / NRRL 3357 / JCM 12722 / SRRC 167).